The chain runs to 407 residues: MSKTKDVKKVVLAYSGGLDTSIILKWLQTELGAEVVTFTADLGQGGELEPARKKAEMMGIKDIRIVDVREEFVADFVFPMFRANTVYEGTYLLGTSIARPLISKHLVDIARETGADAIAHGATGKGNDQVRFELSAYALNPDIKVIAPWRDWSFKSRTDLINFAEQHQIPVAKDKRGEAPFSVDANLLHSSSEGKVLEDPWSEPPEFVHQRTVSPMDAPDKVTEIEIEFLKGDPIALNGKKLSPATMLAALNDLGRDNGIGRLDLVENRFVGMKSRGVYETPGGAILIVAHRAIESITLDRGAAHLKDEFMPRYAELIYNGFWFSPERLMLQAMIDKSQEDVEGTVRLKLYKGNVMVTGRKSKKTLYSDALVTFEDDRGAYDQKDAAGFIRLNALRLRTLAARNRKG.

ATP is bound by residues 13-21 (AYSGGLDTS) and alanine 40. Residues tyrosine 91 and serine 96 each contribute to the L-citrulline site. ATP is bound at residue glycine 121. Residues threonine 123, asparagine 127, and aspartate 128 each coordinate L-aspartate. Asparagine 127 lines the L-citrulline pocket. Residues arginine 131, serine 182, serine 191, glutamate 267, and tyrosine 279 each contribute to the L-citrulline site.

It belongs to the argininosuccinate synthase family. Type 1 subfamily. As to quaternary structure, homotetramer.

It localises to the cytoplasm. It catalyses the reaction L-citrulline + L-aspartate + ATP = 2-(N(omega)-L-arginino)succinate + AMP + diphosphate + H(+). It participates in amino-acid biosynthesis; L-arginine biosynthesis; L-arginine from L-ornithine and carbamoyl phosphate: step 2/3. This is Argininosuccinate synthase from Mesorhizobium japonicum (strain LMG 29417 / CECT 9101 / MAFF 303099) (Mesorhizobium loti (strain MAFF 303099)).